We begin with the raw amino-acid sequence, 315 residues long: Zinc transport protein ZntB (315 aa).

At 1 to 250 the chain is on the cytoplasmic side; it reads MGFMIEHWDF…RDEKTNKNSY (250 aa). Residues 251-271 traverse the membrane as a helical segment; that stretch reads LFTLVATIFLPTSFLTGLLGI. Residues 272–282 are Periplasmic-facing; sequence NIGGMPGVESS. The chain crosses the membrane as a helical span at residues 283–303; sequence MAFTWFCIALIVIFGLEWLLF. The Cytoplasmic segment spans residues 304-315; it reads KRLGFTNKTDDE.

It belongs to the CorA metal ion transporter (MIT) (TC 1.A.35) family. Homopentamer. Can assemble pentamers in the absence of the transmembrane regions.

The protein localises to the cell inner membrane. The enzyme catalyses Zn(2+)(out) + H(+)(out) = Zn(2+)(in) + H(+)(in). In terms of biological role, zinc transporter. Acts as a Zn(2+):proton symporter, which likely mediates zinc ion uptake. This is Zinc transport protein ZntB from Vibrio parahaemolyticus serotype O3:K6 (strain RIMD 2210633).